A 506-amino-acid chain; its full sequence is Maturase K (506 aa).

It belongs to the intron maturase 2 family. MatK subfamily.

It localises to the plastid. The protein resides in the chloroplast. Its function is as follows. Usually encoded in the trnK tRNA gene intron. Probably assists in splicing its own and other chloroplast group II introns. In Rhododendron hippophaeoides (Rhododendron), this protein is Maturase K.